A 527-amino-acid polypeptide reads, in one-letter code: Probable pectinesterase/pectinesterase inhibitor 32 (527 aa).

Positions 1–24 are cleaved as a signal peptide; it reads MAKFRQMGSSIFFLFLIIISLCSA. The pectinesterase inhibitor 32 stretch occupies residues 25 to 165; sequence HKEAFSSTDL…GTTVRNLLTM (141 aa). N-linked (GlcNAc...) asparagine glycans are attached at residues asparagine 110, asparagine 209, asparagine 224, and asparagine 280. The tract at residues 214–511 is pectinesterase 32; that stretch reads DAVVAADGTG…FTVSQLIQGN (298 aa). 2 residues coordinate substrate: threonine 289 and glutamine 319. The active-site Proton donor; for pectinesterase activity is aspartate 342. Cysteine 356 and cysteine 376 are joined by a disulfide. Catalysis depends on aspartate 363, which acts as the Nucleophile; for pectinesterase activity. Residue asparagine 423 is glycosylated (N-linked (GlcNAc...) asparagine). Substrate is bound by residues arginine 431 and tryptophan 433. Residues asparagine 494 and asparagine 501 are each glycosylated (N-linked (GlcNAc...) asparagine).

It in the N-terminal section; belongs to the PMEI family. This sequence in the C-terminal section; belongs to the pectinesterase family. As to expression, expressed in siliques.

It is found in the secreted. It localises to the cell wall. It catalyses the reaction [(1-&gt;4)-alpha-D-galacturonosyl methyl ester](n) + n H2O = [(1-&gt;4)-alpha-D-galacturonosyl](n) + n methanol + n H(+). Its pathway is glycan metabolism; pectin degradation; 2-dehydro-3-deoxy-D-gluconate from pectin: step 1/5. Functionally, acts in the modification of cell walls via demethylesterification of cell wall pectin. This Arabidopsis thaliana (Mouse-ear cress) protein is Probable pectinesterase/pectinesterase inhibitor 32 (PME32).